We begin with the raw amino-acid sequence, 211 residues long: MKAVLFAVAALLAVCIPISAKQCNVNPVNIPKGWITMQQSCRGSMRRQIQTEVGASLQYLAMGAHFSRDGINRPGFAKLFFDAASEEREHAMKLIDYLLMRGELETDVTSLIQIRAPERKSWESGVDALEHALKMETEVTKSIRSVIIACESDPKFNDYHLVDYLTGEFLEEQYKGQRDLAGKASTLKKMLDRHSSLGEFLFDKKLLGMDI.

An N-terminal signal peptide occupies residues 1 to 20 (MKAVLFAVAALLAVCIPISA). The Ferritin-like diiron domain maps to 35 to 191 (ITMQQSCRGS…GKASTLKKML (157 aa)). C41 and C150 are joined by a disulfide. Residues E52, E87, H90, E136, and Q173 each coordinate Fe cation.

It belongs to the ferritin family. As to quaternary structure, oligomer of 12 light (L) chains and 12 heavy (H) chains; L and H chains are disulfide-linked. The functional molecule forms a roughly spherical shell with a diameter of 12 nm and contains a central cavity into which the insoluble ferric iron core is deposited.

The protein localises to the golgi apparatus. It is found in the secreted. The catalysed reaction is 4 Fe(2+) + O2 + 4 H(+) = 4 Fe(3+) + 2 H2O. Functionally, stores iron in a soluble, non-toxic, readily available form. Important for iron homeostasis. Iron is taken up in the ferrous form and deposited as ferric hydroxides after oxidation. Ferritin is composed of a heavy (H) chain which is responsible for the oxidation and uptake of ferrous iron, and a light (L) chain which facilitates the nucleation of the ferrihydrite iron core. The polypeptide is Ferritin heavy chain (Papilio xuthus (Asian swallowtail butterfly)).